Here is a 2273-residue protein sequence, read N- to C-terminus: Acetyl-CoA carboxylase, mitochondrial (2273 aa).

The transit peptide at Lys1 to Leu104 directs the protein to the mitochondrion. The 502-residue stretch at Val134–Leu635 folds into the Biotin carboxylation domain. The region spanning Lys292–Met484 is the ATP-grasp domain. Residue Gly332–Gly337 participates in ATP binding. The active site involves Arg459. A Biotinyl-binding domain is found at Leu763–Thr837. Position 804 is an N6-biotinyllysine (Lys804). In terms of domain architecture, CoA carboxyltransferase N-terminal spans Pro1532 to Glu1867. Residues Pro1532–Lys2187 form a carboxyltransferase region. Positions 1776, 2080, and 2082 each coordinate CoA. Positions Arg1871–Lys2187 constitute a CoA carboxyltransferase C-terminal domain.

Biotin is required as a cofactor.

It localises to the mitochondrion. The enzyme catalyses hydrogencarbonate + acetyl-CoA + ATP = malonyl-CoA + ADP + phosphate + H(+). It catalyses the reaction N(6)-biotinyl-L-lysyl-[protein] + hydrogencarbonate + ATP = N(6)-carboxybiotinyl-L-lysyl-[protein] + ADP + phosphate + H(+). The protein operates within lipid metabolism; malonyl-CoA biosynthesis; malonyl-CoA from acetyl-CoA: step 1/1. In terms of biological role, catalyzes the rate-limiting reaction in the mitochondrial fatty acid synthesis (FAS) type II pathway. Responsible for the production of the mitochondrial malonyl-CoA, used for the biosynthesis of the cofactor lipoic acid. This protein carries three functions: biotin carboxyl carrier protein, biotin carboxylase, and carboxyltransferase. The protein is Acetyl-CoA carboxylase, mitochondrial (HFA1) of Saccharomyces cerevisiae (strain JAY291) (Baker's yeast).